The sequence spans 752 residues: Endo-1,4-beta-xylanase 3 (752 aa).

The tract at residues 1 to 22 (MEKNTNTNHTSDDNNDKNHTNE) is disordered. Residues 10–22 (TSDDNNDKNHTNE) show a composition bias toward basic and acidic residues. CBM-cenC domains lie at 26–163 (KIIL…EGPP) and 197–344 (NIVE…VQGP). In terms of domain architecture, GH10 spans 397-692 (FPYIVKVKQT…NEAGKRFLEV (296 aa)). E526 (proton donor) is an active-site residue. The active-site Nucleophile is the E627.

This sequence belongs to the glycosyl hydrolase 10 (cellulase F) family. Confined to immature xylems.

The enzyme catalyses Endohydrolysis of (1-&gt;4)-beta-D-xylosidic linkages in xylans.. It participates in glycan degradation; xylan degradation. Its function is as follows. Binds to and hydrolyzes insoluble and soluble xylan substrates. The polypeptide is Endo-1,4-beta-xylanase 3 (Arabidopsis thaliana (Mouse-ear cress)).